A 968-amino-acid chain; its full sequence is uncharacterized protein (968 aa).

Residues Leu12 to Phe32 form a helical membrane-spanning segment.

This sequence to E.coli YtfN.

Its subcellular location is the membrane. This is an uncharacterized protein from Buchnera aphidicola subsp. Schizaphis graminum (strain Sg).